Reading from the N-terminus, the 63-residue chain is uncharacterized protein (63 aa).

A compositionally biased stretch (basic and acidic residues) spans M1–H17. Residues M1–T32 form a disordered region. The segment covering K18–T32 has biased composition (polar residues).

It to Y.enterocolitica HemP.

This is an uncharacterized protein from Escherichia coli (strain K12).